Reading from the N-terminus, the 224-residue chain is UPF0758 protein VS_0182 (224 aa).

Residues 1-21 (MPISKMPVESMPREKLLSRGP) are disordered. One can recognise an MPN domain in the interval 102–224 (ALTSPSHTKL…VISFAERGWI (123 aa)). Positions 173, 175, and 186 each coordinate Zn(2+). A JAMM motif motif is present at residues 173-186 (HNHPSGVAEPSQAD).

This sequence belongs to the UPF0758 family.

In Vibrio atlanticus (strain LGP32) (Vibrio splendidus (strain Mel32)), this protein is UPF0758 protein VS_0182.